We begin with the raw amino-acid sequence, 228 residues long: MIGIIGAMEEEVTILKNKLTQLSEISVAHVKFYTGILKDREVVITQSGIGKVNAAISTTLLINKFKPDVIINTGSAGALDESLNVGDVLISDDVKYHDADATAFGYEYGQIPQMPVAFQSSKPLIEKVSQVVQQQQLTAKVGLIVSGDSFIGSVEQRQKIKKAFPNAMAVEMEATAIAQTCYQFNVPFVVVRAVSDLANGEAEMSFEAFLEKAAVSSSQTVEALVSQL.

The active-site Proton acceptor is the E11. Substrate-binding positions include G77, I151, and 172–173; that span reads ME. Residue D196 is the Proton donor of the active site.

Belongs to the PNP/UDP phosphorylase family. MtnN subfamily.

It carries out the reaction S-adenosyl-L-homocysteine + H2O = S-(5-deoxy-D-ribos-5-yl)-L-homocysteine + adenine. The catalysed reaction is S-methyl-5'-thioadenosine + H2O = 5-(methylsulfanyl)-D-ribose + adenine. It catalyses the reaction 5'-deoxyadenosine + H2O = 5-deoxy-D-ribose + adenine. The protein operates within amino-acid biosynthesis; L-methionine biosynthesis via salvage pathway; S-methyl-5-thio-alpha-D-ribose 1-phosphate from S-methyl-5'-thioadenosine (hydrolase route): step 1/2. Functionally, catalyzes the irreversible cleavage of the glycosidic bond in both 5'-methylthioadenosine (MTA) and S-adenosylhomocysteine (SAH/AdoHcy) to adenine and the corresponding thioribose, 5'-methylthioribose and S-ribosylhomocysteine, respectively. Also cleaves 5'-deoxyadenosine, a toxic by-product of radical S-adenosylmethionine (SAM) enzymes, into 5-deoxyribose and adenine. The chain is 5'-methylthioadenosine/S-adenosylhomocysteine nucleosidase from Staphylococcus aureus (strain JH1).